A 167-amino-acid polypeptide reads, in one-letter code: Claudin domain-containing protein 2 (167 aa).

4 helical membrane-spanning segments follow: residues Leu7 to Ala27, Leu59 to Met79, Thr96 to Val116, and Trp134 to Met154.

Belongs to the PMP-22/EMP/MP20 family.

Its subcellular location is the membrane. This Homo sapiens (Human) protein is Claudin domain-containing protein 2 (CLDND2).